The sequence spans 479 residues: Wax ester synthase/diacylglycerol acyltransferase 2 (479 aa).

Residues 1–182 (MAIERQVTEA…VAPKKNKAKN (182 aa)) lie on the Cytoplasmic side of the membrane. The active-site Proton acceptor is the His-144. Residues 183–199 (VCFSLVAWLWFIVRLMF) traverse the membrane as a helical segment. The Lumenal segment spans residues 200-479 (HTCVEVIKSI…PKKVFHASKV (280 aa)). A glycan (N-linked (GlcNAc...) asparagine) is linked at Asn-253.

This sequence in the N-terminal section; belongs to the long-chain O-acyltransferase family. In terms of tissue distribution, mostly expressed in flowers and siliques and barely in roots and stems.

It localises to the cell membrane. Its subcellular location is the endoplasmic reticulum membrane. It catalyses the reaction an acyl-CoA + a 1,2-diacyl-sn-glycerol = a triacyl-sn-glycerol + CoA. The catalysed reaction is a long chain fatty alcohol + a fatty acyl-CoA = a wax ester + CoA. The protein operates within glycerolipid metabolism; triacylglycerol biosynthesis. It functions in the pathway lipid metabolism. Its function is as follows. Bifunctional wax ester synthase/diacylglycerol acyltransferase. Involved in cuticular wax biosynthesis. The chain is Wax ester synthase/diacylglycerol acyltransferase 2 from Arabidopsis thaliana (Mouse-ear cress).